We begin with the raw amino-acid sequence, 193 residues long: Peptidyl-tRNA hydrolase (193 aa).

Tyr-15 provides a ligand contact to tRNA. His-20 (proton acceptor) is an active-site residue. Positions 65, 67, and 113 each coordinate tRNA.

Belongs to the PTH family. Monomer.

The protein resides in the cytoplasm. It catalyses the reaction an N-acyl-L-alpha-aminoacyl-tRNA + H2O = an N-acyl-L-amino acid + a tRNA + H(+). In terms of biological role, hydrolyzes ribosome-free peptidyl-tRNAs (with 1 or more amino acids incorporated), which drop off the ribosome during protein synthesis, or as a result of ribosome stalling. Its function is as follows. Catalyzes the release of premature peptidyl moieties from peptidyl-tRNA molecules trapped in stalled 50S ribosomal subunits, and thus maintains levels of free tRNAs and 50S ribosomes. The chain is Peptidyl-tRNA hydrolase from Ehrlichia ruminantium (strain Gardel).